Here is a 206-residue protein sequence, read N- to C-terminus: Dephospho-CoA kinase (206 aa).

In terms of domain architecture, DPCK spans 4-200; sequence TVALTGGIGS…ASYLKLASQF (197 aa). 12-17 provides a ligand contact to ATP; the sequence is GSGKST.

This sequence belongs to the CoaE family.

The protein localises to the cytoplasm. It catalyses the reaction 3'-dephospho-CoA + ATP = ADP + CoA + H(+). It participates in cofactor biosynthesis; coenzyme A biosynthesis; CoA from (R)-pantothenate: step 5/5. Its function is as follows. Catalyzes the phosphorylation of the 3'-hydroxyl group of dephosphocoenzyme A to form coenzyme A. In Salmonella paratyphi A (strain ATCC 9150 / SARB42), this protein is Dephospho-CoA kinase.